A 1006-amino-acid polypeptide reads, in one-letter code: DNA polymerase (1006 aa).

Belongs to the DNA polymerase type-B family. In terms of assembly, interacts with OPG148. Component of the Uracil-DNA glycosylase(UDG)-OPG148-polymerase complex; OPG148 and OPG116/UDG form a heterodimeric processivity factor that associates with OPG071 to form the processive polymerase holoenzyme.

The enzyme catalyses DNA(n) + a 2'-deoxyribonucleoside 5'-triphosphate = DNA(n+1) + diphosphate. Functionally, catalyzes DNA synthesis. Acquires processivity by associating with a heterodimeric processivity factor comprised of the viral OPG148 and OPG116 proteins, thereby forming the DNA polymerase holoenzyme. Displays 3'- to 5' exonuclease activity. Might participate in viral DNA recombination. Does not perform OPG116/D4synthesis across an abasic site. In Homo sapiens (Human), this protein is DNA polymerase (OPG071).